A 414-amino-acid chain; its full sequence is MATSNSSASLPTLFWVNGSGDSVLSTDGAAMPVQFLVLRIMVALAYGLVGIIGLLGNLAVLWVLGNCGQRVPGLSSDTFVFSLALADLGLALTLPFWATESAMDFHWPFGSALCKVVLTTTVLSIYASTFLITALSIARYWVVAMAVGPGSHLSVFWARVVTLAVWVAAALVTVPTAIFGAEVELWGVCLCLLRFPSRYWLGAYQLQRVVLAFIVPLGVITTSYLLLLAFLERQQRCRPRQWQDSRVVARSVRVLVASFALCWVPNHVVTLWEILVRFDLVPWDSTFYTFHTYILPITTCLAHSNSCLNPVIYCLLRREPQQVLVSSFRALWSRLWPQRKACMEQMALKEVGGRTVASTQESGSSRTHTNTMEHLDEGCSLNTLLSETYQGQSPQILGRSSCSLSQAAVSPGEV.

Residues 1–43 are Extracellular-facing; it reads MATSNSSASLPTLFWVNGSGDSVLSTDGAAMPVQFLVLRIMVA. N-linked (GlcNAc...) asparagine glycosylation is found at Asn5 and Asn17. A helical membrane pass occupies residues 44-64; that stretch reads LAYGLVGIIGLLGNLAVLWVL. The Cytoplasmic portion of the chain corresponds to 65 to 77; the sequence is GNCGQRVPGLSSD. A helical transmembrane segment spans residues 78–98; sequence TFVFSLALADLGLALTLPFWA. Residues 99–116 are Extracellular-facing; it reads TESAMDFHWPFGSALCKV. A disulfide bridge connects residues Cys114 and Cys191. Residues 117–137 form a helical membrane-spanning segment; sequence VLTTTVLSIYASTFLITALSI. At 138-155 the chain is on the cytoplasmic side; it reads ARYWVVAMAVGPGSHLSV. Residues 156–176 form a helical membrane-spanning segment; the sequence is FWARVVTLAVWVAAALVTVPT. Residues 177 to 209 are Extracellular-facing; that stretch reads AIFGAEVELWGVCLCLLRFPSRYWLGAYQLQRV. A helical membrane pass occupies residues 210–230; the sequence is VLAFIVPLGVITTSYLLLLAF. At 231-255 the chain is on the cytoplasmic side; sequence LERQQRCRPRQWQDSRVVARSVRVL. The chain crosses the membrane as a helical span at residues 256–276; the sequence is VASFALCWVPNHVVTLWEILV. Over 277–293 the chain is Extracellular; the sequence is RFDLVPWDSTFYTFHTY. A helical transmembrane segment spans residues 294-316; that stretch reads ILPITTCLAHSNSCLNPVIYCLL. The Cytoplasmic portion of the chain corresponds to 317–414; the sequence is RREPQQVLVS…SQAAVSPGEV (98 aa).

Belongs to the G-protein coupled receptor 1 family. Detected only in bone marrow.

The protein resides in the cell membrane. Its function is as follows. High affinity receptor for INSL5. Also acts as a receptor for RLN3/relaxin-3, as well as bradykinin and kallidin. Binding of the ligand inhibit cAMP accumulation. This Mus musculus (Mouse) protein is Relaxin-3 receptor 2 (Rxfp4).